The chain runs to 553 residues: MSDIALTVSILALVAVVGLFIGNVKFRGVGLGIGGVLFGGIIVGHFVSQAGMTLSSDMLHVIQEFGLILFVYTIGIQVGPGFFASLRVSGLRLNLFAVLIVIIGGLVTAILHKLFDIPLPVVLGIFSGAVTNTPALGAGQQILRDLGTPMEMVDQMGMSYAMAYPFGICGILFTMWMLRVIFRVNVETEAQQHESTRTNGGALIRTINIRVENPNLHNLAIKDVPILNGDKVICSRLKREETLKVPSPETVIQLGDLLHLVGQPADLHNAQLVIGQEVDTSLSTKGTDLRVARVVVTNENVLGKRIRDLHFKERYDVVISRLNRAGVELVASSDISLQFGDILNLVGRPSAIDAVANVLGNAQQKLQQVQMLPVFIGIGLGVLLGSIPVFVPGFPAALKLGLAGGPLIMALILGRIGSIGKLYWFMPPSANLALRELGIVLFLSVVGLKSGGDFIHTLVDGEGLSWIGYGALITAVPLITVGILARMLAKMNYLTMCGMLAGSMTDPPALAFANNLHPTSGAAALSYATVYPLVMFLRIITPQLLAVLFWSIG.

5 helical membrane passes run 4–24 (IALT…IGNV), 28–48 (GVGL…HFVS), 65–85 (FGLI…FFAS), 95–115 (LFAV…HKLF), and 158–178 (MSYA…MWML). RCK C-terminal domains follow at residues 191–276 (QQHE…VIGQ) and 279–361 (DTSL…VLGN). Helical transmembrane passes span 371 to 391 (MLPV…PVFV), 393 to 413 (GFPA…ALIL), 439 to 459 (IVLF…HTLV), 464 to 484 (LSWI…VGIL), 493 to 513 (YLTM…LAFA), and 533 to 553 (LVMF…WSIG).

This sequence belongs to the AAE transporter (TC 2.A.81) family. YidE subfamily.

The protein localises to the cell membrane. This is Putative transport protein YidE from Escherichia coli O6:K15:H31 (strain 536 / UPEC).